Reading from the N-terminus, the 220-residue chain is U1 small nuclear ribonucleoprotein C (220 aa).

The Matrin-type zinc finger occupies 4-36; sequence YYCDYCDIYLTHDSMNARKAHNSGRNHVANVRD. Composition is skewed to pro residues over residues 88 to 130 and 147 to 165; these read PGPP…PFLP and PPFPPNTASPNPGMPPFRP. Positions 88-220 are disordered; sequence PGPPPPGAFP…HPDRLRMLGQ (133 aa). Residues 166–200 show a composition bias toward low complexity; that stretch reads PMGMGMPPAPAQAQAQGSPMGMPQQGQQGTFTPTQ. Residues 211–220 are compositionally biased toward basic and acidic residues; the sequence is HPDRLRMLGQ.

Belongs to the U1 small nuclear ribonucleoprotein C family. As to quaternary structure, U1 snRNP is composed of the 7 core Sm proteins B/B', D1, D2, D3, E, F and G that assemble in a heptameric protein ring on the Sm site of the small nuclear RNA to form the core snRNP, and at least 3 U1 snRNP-specific proteins U1-70K, U1-A and U1-C. U1-C interacts with U1 snRNA and the 5' splice-site region of the pre-mRNA.

It localises to the nucleus. Functionally, component of the spliceosomal U1 snRNP, which is essential for recognition of the pre-mRNA 5' splice-site and the subsequent assembly of the spliceosome. U1-C is directly involved in initial 5' splice-site recognition for both constitutive and regulated alternative splicing. The interaction with the 5' splice-site seems to precede base-pairing between the pre-mRNA and the U1 snRNA. Stimulates commitment or early (E) complex formation by stabilizing the base pairing of the 5' end of the U1 snRNA and the 5' splice-site region. The polypeptide is U1 small nuclear ribonucleoprotein C (Cryptococcus neoformans var. neoformans serotype D (strain JEC21 / ATCC MYA-565) (Filobasidiella neoformans)).